We begin with the raw amino-acid sequence, 365 residues long: Chorismate synthase (365 aa).

Position 46 (Arg46) interacts with NADP(+). Residues 123–125 (RSS), 241–242 (NG), Gly281, 296–300 (KPTPS), and Arg322 each bind FMN.

It belongs to the chorismate synthase family. Homotetramer. FMNH2 is required as a cofactor.

The enzyme catalyses 5-O-(1-carboxyvinyl)-3-phosphoshikimate = chorismate + phosphate. It participates in metabolic intermediate biosynthesis; chorismate biosynthesis; chorismate from D-erythrose 4-phosphate and phosphoenolpyruvate: step 7/7. Functionally, catalyzes the anti-1,4-elimination of the C-3 phosphate and the C-6 proR hydrogen from 5-enolpyruvylshikimate-3-phosphate (EPSP) to yield chorismate, which is the branch point compound that serves as the starting substrate for the three terminal pathways of aromatic amino acid biosynthesis. This reaction introduces a second double bond into the aromatic ring system. This Helicobacter pylori (strain G27) protein is Chorismate synthase.